The primary structure comprises 227 residues: PKHD-type hydroxylase GDI1238/Gdia_1949 (227 aa).

The 101-residue stretch at Arg-78–Ser-178 folds into the Fe2OG dioxygenase domain. Residues His-96, Asp-98, and His-159 each coordinate Fe cation. Arg-169 provides a ligand contact to 2-oxoglutarate.

Fe(2+) serves as cofactor. L-ascorbate is required as a cofactor.

The polypeptide is PKHD-type hydroxylase GDI1238/Gdia_1949 (Gluconacetobacter diazotrophicus (strain ATCC 49037 / DSM 5601 / CCUG 37298 / CIP 103539 / LMG 7603 / PAl5)).